The chain runs to 580 residues: 2-succinyl-5-enolpyruvyl-6-hydroxy-3-cyclohexene-1-carboxylate synthase (580 aa).

Residues 178 to 199 are disordered; it reads LEPTPMPGDLTEPPAAAQPRDD.

This sequence belongs to the TPP enzyme family. MenD subfamily. As to quaternary structure, homodimer. Mg(2+) serves as cofactor. Requires Mn(2+) as cofactor. The cofactor is thiamine diphosphate.

The catalysed reaction is isochorismate + 2-oxoglutarate + H(+) = 5-enolpyruvoyl-6-hydroxy-2-succinyl-cyclohex-3-ene-1-carboxylate + CO2. Its pathway is quinol/quinone metabolism; 1,4-dihydroxy-2-naphthoate biosynthesis; 1,4-dihydroxy-2-naphthoate from chorismate: step 2/7. It participates in quinol/quinone metabolism; menaquinone biosynthesis. Catalyzes the thiamine diphosphate-dependent decarboxylation of 2-oxoglutarate and the subsequent addition of the resulting succinic semialdehyde-thiamine pyrophosphate anion to isochorismate to yield 2-succinyl-5-enolpyruvyl-6-hydroxy-3-cyclohexene-1-carboxylate (SEPHCHC). The sequence is that of 2-succinyl-5-enolpyruvyl-6-hydroxy-3-cyclohexene-1-carboxylate synthase from Roseiflexus castenholzii (strain DSM 13941 / HLO8).